A 501-amino-acid polypeptide reads, in one-letter code: Bifunctional purine biosynthesis protein PurH (501 aa).

The region spanning 1–144 is the MGS-like domain; sequence MKKRALISVF…KNFKDVVVLS (144 aa).

Belongs to the PurH family.

The enzyme catalyses (6R)-10-formyltetrahydrofolate + 5-amino-1-(5-phospho-beta-D-ribosyl)imidazole-4-carboxamide = 5-formamido-1-(5-phospho-D-ribosyl)imidazole-4-carboxamide + (6S)-5,6,7,8-tetrahydrofolate. It carries out the reaction IMP + H2O = 5-formamido-1-(5-phospho-D-ribosyl)imidazole-4-carboxamide. The protein operates within purine metabolism; IMP biosynthesis via de novo pathway; 5-formamido-1-(5-phospho-D-ribosyl)imidazole-4-carboxamide from 5-amino-1-(5-phospho-D-ribosyl)imidazole-4-carboxamide (10-formyl THF route): step 1/1. It participates in purine metabolism; IMP biosynthesis via de novo pathway; IMP from 5-formamido-1-(5-phospho-D-ribosyl)imidazole-4-carboxamide: step 1/1. This chain is Bifunctional purine biosynthesis protein PurH, found in Clostridium perfringens (strain 13 / Type A).